A 97-amino-acid polypeptide reads, in one-letter code: DNA/RNA-binding protein Alba 1 (97 aa).

An N-acetylserine; by ard1 acetylase modification is found at S2. K16, K17, and Y22 together coordinate RNA. An N6,N6,N6-trimethyllysine; alternate modification is found at K16. The residue at position 16 (K16) is an N6,N6-dimethyllysine; alternate. K16 is modified (N6-acetyllysine; alternate). An N6-methyllysine; alternate modification is found at K16. N31 carries the deamidated asparagine; partial modification. Q32 carries the post-translational modification Deamidated glutamine; partial. N6-methyllysine; partial is present on K40. Residues R42 and R44 each contribute to the RNA site. An N6-acetyllysine; partial modification is found at K48. D51 is subject to Aspartate methyl ester; partial. N58 is subject to Deamidated asparagine; partial. K64 carries the N6-acetyllysine; alternate; partial modification. An N6-methyllysine; alternate; partial modification is found at K64. K68 bears the N6-acetyllysine; partial mark. Q75 is subject to N5-methylglutamine; partial. The residue at position 81 (D81) is an Aspartate methyl ester; partial. K97 bears the N6-methyllysine; partial mark.

This sequence belongs to the histone-like Alba family. As to quaternary structure, forms homodimers and higher order oligomers, e.g. homotetramers. Post-translationally, acetylated. Acetylation at Lys-16 by the Pat acetylase decreases DNA-binding affinity. Deacetylation at Lys-16 by the CobB deacetylase increases DNA-binding affinity. Acetylation at Ser-2 is involved in the regulation of the turnover of the protein.

The protein localises to the cytoplasm. Its subcellular location is the chromosome. Binds double-stranded DNA tightly but without sequence specificity. Involved in DNA compaction. Possesses DNA endonuclease activity. Prevents transcription after DNA binding. Binds single-stranded DNA and RNA in vitro. Binds rRNA and mRNA in vivo. May play a role in maintaining the structural and functional stability of RNA, and, perhaps, ribosomes. Binds double-stranded RNA (dsRNA) and exhibits RNA chaperone activity. Required for normal growth. This chain is DNA/RNA-binding protein Alba 1, found in Saccharolobus islandicus (strain REY15A) (Sulfolobus islandicus).